The primary structure comprises 363 residues: S-methylmethionine--homocysteine S-methyltransferase BHMT2 (363 aa).

Residues lysine 11 to leucine 305 form the Hcy-binding domain. Residues cysteine 208, cysteine 290, and cysteine 291 each contribute to the Zn(2+) site. Serine 321 carries the post-translational modification Phosphoserine.

Homotetramer. It depends on Zn(2+) as a cofactor. In terms of tissue distribution, expressed in fetal heart, lung, liver, kidney and eye.

The catalysed reaction is S-methyl-L-methionine + L-homocysteine = 2 L-methionine + H(+). It functions in the pathway amino-acid biosynthesis; L-methionine biosynthesis via de novo pathway; L-methionine from L-homocysteine (BhmT route): step 1/1. Involved in the regulation of homocysteine metabolism. Converts homocysteine to methionine using S-methylmethionine (SMM) as a methyl donor. In Mus musculus (Mouse), this protein is S-methylmethionine--homocysteine S-methyltransferase BHMT2 (Bhmt2).